The following is a 244-amino-acid chain: tRNA pseudouridine synthase A (244 aa).

Asp-52 serves as the catalytic Nucleophile. Tyr-110 is a binding site for substrate.

The protein belongs to the tRNA pseudouridine synthase TruA family. As to quaternary structure, homodimer.

It carries out the reaction uridine(38/39/40) in tRNA = pseudouridine(38/39/40) in tRNA. Functionally, formation of pseudouridine at positions 38, 39 and 40 in the anticodon stem and loop of transfer RNAs. The sequence is that of tRNA pseudouridine synthase A from Clostridium botulinum (strain Eklund 17B / Type B).